The chain runs to 329 residues: Alpha-tubulin N-acetyltransferase 1 (329 aa).

Positions 5 to 185 constitute an N-acetyltransferase domain; sequence SQVALLPKLS…NNFVVFHRYF (181 aa). Acetyl-CoA is bound by residues 119–132 and 155–164; these read FFVD…GFGK and SVKFLAFLQK. 2 disordered regions span residues 218–261 and 306–329; these read PKYQ…GVGK and GARR…TPEH. The segment covering 220-229 has biased composition (polar residues); the sequence is YQSTTGPNNN. Residues 238–249 are compositionally biased toward pro residues; the sequence is TPPPPPLPPPLV. A compositionally biased stretch (polar residues) spans 313 to 329; sequence PTRSGVQYNIISGTPEH.

It belongs to the acetyltransferase ATAT1 family.

The enzyme catalyses L-lysyl-[alpha-tubulin] + acetyl-CoA = N(6)-acetyl-L-lysyl-[alpha-tubulin] + CoA + H(+). Functionally, specifically acetylates 'Lys-40' in alpha-tubulin on the lumenal side of microtubules. Promotes microtubule destabilization and accelerates microtubule dynamics; this activity may be independent of acetylation activity. Acetylates alpha-tubulin with a slow enzymatic rate, due to a catalytic site that is not optimized for acetyl transfer. Enters the microtubule through each end and diffuses quickly throughout the lumen of microtubules. Acetylates only long/old microtubules because of its slow acetylation rate since it does not have time to act on dynamically unstable microtubules before the enzyme is released. This is Alpha-tubulin N-acetyltransferase 1 from Trypanosoma cruzi (strain CL Brener).